We begin with the raw amino-acid sequence, 228 residues long: Large ribosomal subunit protein uL16 (228 aa).

This sequence belongs to the universal ribosomal protein uL16 family. In terms of assembly, component of the small ribosomal subunit. Mature ribosomes consist of a small (40S) and a large (60S) subunit. The 40S subunit contains about 33 different proteins and 1 molecule of RNA (18S). The 60S subunit contains about 49 different proteins and 3 molecules of RNA (25S, 5.8S and 5S).

The protein is Large ribosomal subunit protein uL16 (RPL10) of Pinus taeda (Loblolly pine).